A 721-amino-acid polypeptide reads, in one-letter code: DNA ligase (721 aa).

Residues 42–46 (DAEYD), 91–92 (SL), and E125 contribute to the NAD(+) site. The N6-AMP-lysine intermediate role is filled by K127. Residues R148, E184, K300, and K324 each contribute to the NAD(+) site. Residues C430, C433, C448, and C454 each contribute to the Zn(2+) site. The 80-residue stretch at 642–721 (STGSPVEGKT…DAWFTLVGEE (80 aa)) folds into the BRCT domain.

Belongs to the NAD-dependent DNA ligase family. LigA subfamily. It depends on Mg(2+) as a cofactor. The cofactor is Mn(2+).

The catalysed reaction is NAD(+) + (deoxyribonucleotide)n-3'-hydroxyl + 5'-phospho-(deoxyribonucleotide)m = (deoxyribonucleotide)n+m + AMP + beta-nicotinamide D-nucleotide.. Its function is as follows. DNA ligase that catalyzes the formation of phosphodiester linkages between 5'-phosphoryl and 3'-hydroxyl groups in double-stranded DNA using NAD as a coenzyme and as the energy source for the reaction. It is essential for DNA replication and repair of damaged DNA. This chain is DNA ligase, found in Brucella anthropi (strain ATCC 49188 / DSM 6882 / CCUG 24695 / JCM 21032 / LMG 3331 / NBRC 15819 / NCTC 12168 / Alc 37) (Ochrobactrum anthropi).